A 232-amino-acid chain; its full sequence is GTP cyclohydrolase III (232 aa).

It belongs to the archaeal-type GTP cyclohydrolase family.

The enzyme catalyses GTP + 3 H2O = 2-amino-5-formylamino-6-(5-phospho-D-ribosylamino)pyrimidin-4(3H)-one + 2 phosphate + 2 H(+). Catalyzes the formation of 2-amino-5-formylamino-6-ribofuranosylamino-4(3H)-pyrimidinone ribonucleotide monophosphate and inorganic phosphate from GTP. Also has an independent pyrophosphate phosphohydrolase activity. This is GTP cyclohydrolase III from Saccharolobus islandicus (strain Y.G.57.14 / Yellowstone #1) (Sulfolobus islandicus).